We begin with the raw amino-acid sequence, 316 residues long: Putative transketolase C-terminal section (316 aa).

The protein belongs to the transketolase family. It depends on thiamine diphosphate as a cofactor.

The enzyme catalyses D-sedoheptulose 7-phosphate + D-glyceraldehyde 3-phosphate = aldehydo-D-ribose 5-phosphate + D-xylulose 5-phosphate. The polypeptide is Putative transketolase C-terminal section (Methanocaldococcus jannaschii (strain ATCC 43067 / DSM 2661 / JAL-1 / JCM 10045 / NBRC 100440) (Methanococcus jannaschii)).